Reading from the N-terminus, the 277-residue chain is Protein G1-like2 (277 aa).

Gly residues predominate over residues 1 to 16 (MQGGGGGDSSGGGGGE). Disordered regions lie at residues 1-28 (MQGGGGGDSSGGGGGEAPRPSRYESQKR), 141-203 (RGIA…GHFF), and 225-245 (HQVSNAGNGGNTNTNTNTNTG). Basic and acidic residues predominate over residues 19–28 (RPSRYESQKR). The ALOG domain maps to 22 to 149 (RYESQKRRDW…ARGIAYEKKR (128 aa)). The Nuclear localization signal signature appears at 147 to 151 (KKRRK). A compositionally biased stretch (low complexity) spans 154–177 (PTSSSSSQAAAAAAAATSPASPAA). A compositionally biased stretch (pro residues) spans 178 to 187 (SPTPPPPPPT).

The protein belongs to the plant homeotic and developmental regulators ALOG protein family.

The protein localises to the nucleus. In terms of biological role, probable transcription regulator that acts as a developmental regulator by promoting cell growth in response to light. This is Protein G1-like2 (G1L2) from Oryza sativa subsp. japonica (Rice).